Reading from the N-terminus, the 149-residue chain is Large ribosomal subunit protein bL9 (149 aa).

This sequence belongs to the bacterial ribosomal protein bL9 family.

In terms of biological role, binds to the 23S rRNA. This chain is Large ribosomal subunit protein bL9, found in Citrobacter koseri (strain ATCC BAA-895 / CDC 4225-83 / SGSC4696).